We begin with the raw amino-acid sequence, 349 residues long: Polyamine aminopropyltransferase 2 (349 aa).

In terms of domain architecture, PABS spans 29–267 (DGAITAIEDS…SSWGFLLASD (239 aa)). Position 60 (Gln-60) interacts with S-methyl-5'-thioadenosine. His-91 and Glu-115 together coordinate spermidine. S-methyl-5'-thioadenosine contacts are provided by residues Asp-135 and 167 to 168 (DG). Asp-185 (proton acceptor) is an active-site residue. Pro-194 contributes to the S-methyl-5'-thioadenosine binding site.

The protein belongs to the spermidine/spermine synthase family. Homodimer or homotetramer.

It localises to the cytoplasm. It catalyses the reaction S-adenosyl 3-(methylsulfanyl)propylamine + putrescine = S-methyl-5'-thioadenosine + spermidine + H(+). It functions in the pathway amine and polyamine biosynthesis; spermidine biosynthesis; spermidine from putrescine: step 1/1. Functionally, catalyzes the irreversible transfer of a propylamine group from the amino donor S-adenosylmethioninamine (decarboxy-AdoMet) to putrescine (1,4-diaminobutane) to yield spermidine. In Pseudomonas aeruginosa (strain ATCC 15692 / DSM 22644 / CIP 104116 / JCM 14847 / LMG 12228 / 1C / PRS 101 / PAO1), this protein is Polyamine aminopropyltransferase 2.